The chain runs to 143 residues: Small ribosomal subunit protein bS18 (143 aa).

Residues 1–72 form a disordered region; the sequence is MARPDMGGPK…RGGEEGGRRG (72 aa). Over residues 10-50 the composition is skewed to gly residues; the sequence is KSSGGFGGPRSGGGFGGGGYGGGGGGGGGYGGGGGGGFGGR. Residues 51 to 70 are compositionally biased toward basic and acidic residues; the sequence is GGDRGDRGDRDDRGGEEGGR.

The protein belongs to the bacterial ribosomal protein bS18 family. Part of the 30S ribosomal subunit. Forms a tight heterodimer with protein bS6.

Functionally, binds as a heterodimer with protein bS6 to the central domain of the 16S rRNA, where it helps stabilize the platform of the 30S subunit. The polypeptide is Small ribosomal subunit protein bS18 (Anaeromyxobacter sp. (strain Fw109-5)).